The chain runs to 335 residues: MTKHATHAAPQRVLFVHAHPDDESLFTGLLVSASSRVGAETSVLTCTLGEEGEVIGEKYQNLTSEHSDLLGGFRIGELQQALEHLGVHQGPQFLGGPSRWRDSGMADTPTIRHPRAFAGDSEDNWELQVEQLLAVLRRERPEVLVTYGPDGGYGHPDHIRAHRVTHEAVRRLVDAGEEAAPHEIWWAVTPAGAFHAAMTGVEIPEGWREAEDGDVALVAEEFIDAFVQGTPEDVAAKRKAMAAHATQLWVADGTRTDVNPEARDTTTPTGEYLFALSNLISQPILPVEGYQLGWVKNADPNTNRQISLLHFDFVVPSNGTAQEHGNDGKVRGENG.

Zn(2+) is bound by residues His19, Asp22, and His158.

Belongs to the MshB deacetylase family. Requires Zn(2+) as cofactor.

The enzyme catalyses 1D-myo-inositol 2-acetamido-2-deoxy-alpha-D-glucopyranoside + H2O = 1D-myo-inositol 2-amino-2-deoxy-alpha-D-glucopyranoside + acetate. Functionally, catalyzes the deacetylation of 1D-myo-inositol 2-acetamido-2-deoxy-alpha-D-glucopyranoside (GlcNAc-Ins) in the mycothiol biosynthesis pathway. The sequence is that of 1D-myo-inositol 2-acetamido-2-deoxy-alpha-D-glucopyranoside deacetylase from Corynebacterium urealyticum (strain ATCC 43042 / DSM 7109).